Reading from the N-terminus, the 149-residue chain is Ribonuclease pancreatic (149 aa).

Residues 1-25 (MGLEKSLMLFPLFVLLLGWVQPSLG) form the signal peptide. The disordered stretch occupies residues 30–49 (AQKFQRQHMDPAGSSSNSPT). Residues Lys32 and Arg35 each contribute to the substrate site. His37 acts as the Proton acceptor in catalysis. Intrachain disulfides connect Cys51–Cys109, Cys65–Cys120, Cys83–Cys135, and Cys90–Cys97. A substrate-binding site is contributed by 66–70 (KPVNT). N-linked (GlcNAc...) asparagine glycosylation is present at Asn87. Lys91 serves as a coordination point for substrate. His144 acts as the Proton donor in catalysis.

Belongs to the pancreatic ribonuclease family. Monomer. Interacts with and forms tight 1:1 complexes with RNH1. Dimerization of two such complexes may occur. Interaction with RNH1 inhibits this protein. In terms of tissue distribution, pancreas.

Its subcellular location is the secreted. It catalyses the reaction an [RNA] containing cytidine + H2O = an [RNA]-3'-cytidine-3'-phosphate + a 5'-hydroxy-ribonucleotide-3'-[RNA].. The enzyme catalyses an [RNA] containing uridine + H2O = an [RNA]-3'-uridine-3'-phosphate + a 5'-hydroxy-ribonucleotide-3'-[RNA].. Its function is as follows. Endonuclease that catalyzes the cleavage of RNA on the 3' side of pyrimidine nucleotides. Acts on single-stranded and double-stranded RNA. In Mus saxicola (Brown spiny mouse), this protein is Ribonuclease pancreatic (Rnase1).